A 169-amino-acid polypeptide reads, in one-letter code: MGRRFLVTVRIQRAGRPLQERVFLVKFVRSRRPRTASCALAFVNMLLRLERILRRGPHRNPGPGDDDGQRSRSSSSAQLRCRFELRGPHYLLPPGARRSAGRLPGHAGGAARVRGSAGCARCLGSPAARLGPRAGTSRHRAIFAFRWVLFVFRWVVFVYRWERRPDRRA.

The segment at 1–63 (MGRRFLVTVR…RRGPHRNPGP (63 aa)) is interaction with CDK5RAP3 and MDM2. A disordered region spans residues 54–73 (RRGPHRNPGPGDDDGQRSRS).

As to quaternary structure, does not interact with cyclins, CDK1, CDK2, CDK4, CDK5 or CDK6. Interacts with COMMD1. Binds to BCL6, E2F1, HUWE1, MDM2, MYC, NPM1/B23, TOP1/TOPOI and UBE2I/UBC9. Interacts with TBRG1. Interacts with CDKN2AIP and E4F1. Interacts with CDK5RAP3 and MDM2; form a ternary complex involved in regulation of p53/TP53. Interacts with NOP53; the interaction is direct and promotes ARF nucleoplasmic relocalization and ubiquitin-mediated proteasomal degradation. Interacts with TTF1 (via the N-terminal region (NRD) and a C-terminal region); the interaction is direct and inhibits the nucleolar localization of TTF1. In terms of assembly, interacts with C1QBP. Post-translationally, ubiquitinated in normal cells by TRIP12 via the ubiquitin fusion degradation (UFD) pathway, a process that mediates ubiquitination at the N-terminus, regardless of the absence of lysine residues. Ubiquitination leads to its proteasomal degradation. In cancer cells, however, TRIP12 is located in a different cell compartment, preventing ubiquitination and degradation.

The protein resides in the nucleus. The protein localises to the nucleolus. It localises to the nucleoplasm. Its subcellular location is the mitochondrion. Capable of inducing cell cycle arrest in G1 and G2 phases. Acts as a tumor suppressor. Binds to MDM2 and blocks its nucleocytoplasmic shuttling by sequestering it in the nucleolus. This inhibits the oncogenic action of MDM2 by blocking MDM2-induced degradation of p53 and enhancing p53-dependent transactivation and apoptosis. Also induces G2 arrest and apoptosis in a p53-independent manner by preventing the activation of cyclin B1/CDC2 complexes. Binds to BCL6 and down-regulates BCL6-induced transcriptional repression. Binds to E2F1 and MYC and blocks their transcriptional activator activity but has no effect on MYC transcriptional repression. Binds to TOP1/TOPOI and stimulates its activity. This complex binds to rRNA gene promoters and may play a role in rRNA transcription and/or maturation. Interacts with NPM1/B23 and promotes its polyubiquitination and degradation, thus inhibiting rRNA processing. Plays a role in inhibiting ribosome biogenesis, perhaps by binding to the nucleolar localization sequence of transcription termination factor TTF1, and thereby preventing nucleolar localization of TTF1. Interacts with COMMD1 and promotes its 'Lys63'-linked polyubiquitination. Interacts with UBE2I/UBC9 and enhances sumoylation of a number of its binding partners including MDM2 and E2F1. Binds to HUWE1 and represses its ubiquitin ligase activity. May play a role in controlling cell proliferation and apoptosis during mammary gland development. Its function is as follows. May be involved in regulation of autophagy and caspase-independent cell death; the short-lived mitochondrial isoform is stabilized by C1QBP. The sequence is that of Tumor suppressor ARF from Mus musculus (Mouse).